We begin with the raw amino-acid sequence, 118 residues long: Holo-[acyl-carrier-protein] synthase (118 aa).

The Mg(2+) site is built by Asp8 and Glu58.

It belongs to the P-Pant transferase superfamily. AcpS family. Requires Mg(2+) as cofactor.

It localises to the cytoplasm. It carries out the reaction apo-[ACP] + CoA = holo-[ACP] + adenosine 3',5'-bisphosphate + H(+). Transfers the 4'-phosphopantetheine moiety from coenzyme A to a Ser of acyl-carrier-protein. This Listeria monocytogenes serotype 4a (strain HCC23) protein is Holo-[acyl-carrier-protein] synthase.